Here is a 155-residue protein sequence, read N- to C-terminus: Putative ATP synthase protein YMF19-like protein (155 aa).

The next 3 helical transmembrane spans lie at 23–43, 89–109, and 117–137; these read FLWL…VLVF, WRAL…LGSF, and VDFG…LFFF.

Belongs to the ATPase protein YMF19 family.

Its subcellular location is the mitochondrion membrane. In Marchantia polymorpha (Common liverwort), this protein is Putative ATP synthase protein YMF19-like protein (YMF18).